A 292-amino-acid chain; its full sequence is Ephrin type-A receptor 4a (292 aa).

Residues 1–9 and K27 contribute to the ATP site; that span reads IGIGEFGEV. Residues 1-265 form the Protein kinase domain; sequence IGIGEFGEVC…QIVNMLDKLI (265 aa). D120 (proton acceptor) is an active-site residue. Position 153 is a phosphotyrosine; by autocatalysis (Y153).

The protein belongs to the protein kinase superfamily. Tyr protein kinase family. Ephrin receptor subfamily. Widely expressed in the developing nervous system.

Its subcellular location is the cell membrane. The protein localises to the early endosome. The enzyme catalyses L-tyrosyl-[protein] + ATP = O-phospho-L-tyrosyl-[protein] + ADP + H(+). Receptor tyrosine kinase which binds membrane-bound ephrin family ligands residing on adjacent cells, leading to contact-dependent bidirectional signaling into neighboring cells. The signaling pathway downstream of the receptor is referred to as forward signaling while the signaling pathway downstream of the ephrin ligand is referred to as reverse signaling. Highly promiscuous, it has the unique property among Eph receptors to bind and to be physiologically activated by both GPI-anchored ephrin-A and transmembrane ephrin-B ligands including efna1 and efnb3. Upon activation by ephrin ligands, modulates cell morphology and integrin-dependent cell adhesion through regulation of the Rac, Rap and Rho GTPases activity. Plays an important role in the development of the nervous system controlling different steps of axonal guidance including the establishment of the corticospinal projections. This is Ephrin type-A receptor 4a (epha4a) from Danio rerio (Zebrafish).